Reading from the N-terminus, the 126-residue chain is Large ribosomal subunit protein bL12 (126 aa).

This sequence belongs to the bacterial ribosomal protein bL12 family. In terms of assembly, homodimer. Part of the ribosomal stalk of the 50S ribosomal subunit. Forms a multimeric L10(L12)X complex, where L10 forms an elongated spine to which 2 to 4 L12 dimers bind in a sequential fashion. Binds GTP-bound translation factors.

Its function is as follows. Forms part of the ribosomal stalk which helps the ribosome interact with GTP-bound translation factors. Is thus essential for accurate translation. The protein is Large ribosomal subunit protein bL12 of Beijerinckia indica subsp. indica (strain ATCC 9039 / DSM 1715 / NCIMB 8712).